The primary structure comprises 120 residues: Transcription elongation factor SPT4 (120 aa).

Residues 1–39 form an interaction with spt-5 region; the sequence is MAASIPSDLRNLRACLLCSLIKSVDAFQTDGCENCDEVL. The segment at 15 to 35 adopts a C4-type zinc-finger fold; the sequence is CLLCSLIKSVDAFQTDGCENC.

The protein belongs to the SPT4 family. In terms of assembly, interacts with spt-5 to form DSIF. DSIF interacts with RNA polymerase II and with the positive transcription elongation factor b complex (P-TEFb complex), which is composed of cdk-9 and cyclin-T.

It is found in the nucleus. Functionally, may function as a component of the DRB sensitivity-inducing factor complex (DSIF complex), which regulates transcription elongation by RNA polymerase II. DSIF may enhance transcriptional pausing at sites proximal to the promoter, which may in turn facilitate the assembly of an elongation competent RNA polymerase II complex. This chain is Transcription elongation factor SPT4 (spt-4), found in Caenorhabditis briggsae.